The sequence spans 97 residues: Aspartyl/glutamyl-tRNA(Asn/Gln) amidotransferase subunit C (97 aa).

Belongs to the GatC family. In terms of assembly, heterotrimer of A, B and C subunits.

The enzyme catalyses L-glutamyl-tRNA(Gln) + L-glutamine + ATP + H2O = L-glutaminyl-tRNA(Gln) + L-glutamate + ADP + phosphate + H(+). It catalyses the reaction L-aspartyl-tRNA(Asn) + L-glutamine + ATP + H2O = L-asparaginyl-tRNA(Asn) + L-glutamate + ADP + phosphate + 2 H(+). Functionally, allows the formation of correctly charged Asn-tRNA(Asn) or Gln-tRNA(Gln) through the transamidation of misacylated Asp-tRNA(Asn) or Glu-tRNA(Gln) in organisms which lack either or both of asparaginyl-tRNA or glutaminyl-tRNA synthetases. The reaction takes place in the presence of glutamine and ATP through an activated phospho-Asp-tRNA(Asn) or phospho-Glu-tRNA(Gln). This chain is Aspartyl/glutamyl-tRNA(Asn/Gln) amidotransferase subunit C, found in Prochlorococcus marinus (strain MIT 9215).